The primary structure comprises 417 residues: Serine hydroxymethyltransferase (417 aa).

(6S)-5,6,7,8-tetrahydrofolate-binding positions include L121 and 125 to 127; that span reads GHL. The residue at position 229 (K229) is an N6-(pyridoxal phosphate)lysine. 355-357 contacts (6S)-5,6,7,8-tetrahydrofolate; that stretch reads SPF.

This sequence belongs to the SHMT family. Homodimer. Pyridoxal 5'-phosphate is required as a cofactor.

It is found in the cytoplasm. It catalyses the reaction (6R)-5,10-methylene-5,6,7,8-tetrahydrofolate + glycine + H2O = (6S)-5,6,7,8-tetrahydrofolate + L-serine. The protein operates within one-carbon metabolism; tetrahydrofolate interconversion. It participates in amino-acid biosynthesis; glycine biosynthesis; glycine from L-serine: step 1/1. Catalyzes the reversible interconversion of serine and glycine with tetrahydrofolate (THF) serving as the one-carbon carrier. This reaction serves as the major source of one-carbon groups required for the biosynthesis of purines, thymidylate, methionine, and other important biomolecules. Also exhibits THF-independent aldolase activity toward beta-hydroxyamino acids, producing glycine and aldehydes, via a retro-aldol mechanism. This chain is Serine hydroxymethyltransferase, found in Xylella fastidiosa (strain M23).